The sequence spans 649 residues: Serine/threonine kinase-like domain-containing protein STKLD1 (649 aa).

Over residues 1 to 13 (MLGPESDGRRPTQ) the composition is skewed to basic and acidic residues. Positions 1 to 23 (MLGPESDGRRPTQGERGPGYPGE) are disordered. The Protein kinase domain occupies 28–379 (YQVLYQLNPG…CNQAITSAVL (352 aa)). ATP is bound by residues 34 to 42 (LNPGALGVN) and Lys-57. The interval 621–640 (FSKPGLPPGGSPQPGCTASG) is disordered.

Belongs to the protein kinase superfamily. Ser/Thr protein kinase family. STKL subfamily.

The sequence is that of Serine/threonine kinase-like domain-containing protein STKLD1 (STKLD1) from Macaca fascicularis (Crab-eating macaque).